The sequence spans 656 residues: Receptor-type tyrosine-protein phosphatase R (656 aa).

Positions 1–23 (MRRAVGFPALCLLLNLHAAGCFS) are cleaved as a signal peptide. Ser23 carries O-linked (Xyl...) (chondroitin sulfate) serine glycosylation. Topologically, residues 24-226 (RNNDHFLAIR…EADKIWSKEG (203 aa)) are extracellular. The N-linked (GlcNAc...) asparagine glycan is linked to Asn128. The helical transmembrane segment at 227–247 (FYAVVIFLSIFIIIVTCLMII) threads the bilayer. Topologically, residues 248-656 (YRLKERLQLS…ESRLSPETVE (409 aa)) are cytoplasmic. The interval 269–289 (HLSPIARQQAQSEAKTTHSMV) is disordered. Phosphoserine is present on Ser271. The segment covering 274 to 289 (ARQQAQSEAKTTHSMV) has biased composition (polar residues). Ser338 carries the post-translational modification Phosphoserine; by PKA. A Tyrosine-protein phosphatase domain is found at 392-646 (LQSEFMEIPM…EFVHHALCLF (255 aa)). Residues Asp553, 587–593 (CSAGIGR), and Gln631 contribute to the substrate site. Residue Cys587 is the Phosphocysteine intermediate of the active site.

It belongs to the protein-tyrosine phosphatase family. Receptor class 7 subfamily. In terms of assembly, interacts with MAPKs. Expressed in the heart, brain, spleen, lung, liver, skeletal muscle, kidney and testis. Isoform alpha is expressed throughout the granular layer of the cerebellar but not within the Purkinje cells, also in the villi of the ileum and jejunum and both the villi and crypts of the duodenum. Isoform beta is expressed only in the Purkinje cells. Isoform gamma is expressed throughout the brain, the villi and crypts of the duodenum, jejunum and ileum and expressed at low levels in the proximal colon.

It is found in the cell membrane. Its subcellular location is the cytoplasm. It carries out the reaction O-phospho-L-tyrosyl-[protein] + H2O = L-tyrosyl-[protein] + phosphate. Sequesters mitogen-activated protein kinases (MAPKs) such as MAPK1, MAPK3 and MAPK14 in the cytoplasm in an inactive form. The MAPKs bind to a dephosphorylated kinase interacting motif, phosphorylation of which by the protein kinase A complex releases the MAPKs for activation and translocation into the nucleus. Isoform gamma may have a role in patterning and cellular proliferation of skeletal elements in the precartilaginous/cartilaginous skeleton. In Mus musculus (Mouse), this protein is Receptor-type tyrosine-protein phosphatase R (Ptprr).